The sequence spans 267 residues: Small ribosomal subunit protein uS2 (267 aa).

The tract at residues 234–267 (DNAEEELAEAISQEEPSAAEELPDDMADNENEFE) is disordered. Acidic residues predominate over residues 250 to 267 (SAAEELPDDMADNENEFE).

The protein belongs to the universal ribosomal protein uS2 family.

The sequence is that of Small ribosomal subunit protein uS2 from Dichelobacter nodosus (strain VCS1703A).